The primary structure comprises 187 residues: Protein GrpE (187 aa).

A disordered region spans residues 1 to 26; that stretch reads MNDLKNAENGPDEADTPQGAPSQEPD.

Belongs to the GrpE family. As to quaternary structure, homodimer.

The protein resides in the cytoplasm. In terms of biological role, participates actively in the response to hyperosmotic and heat shock by preventing the aggregation of stress-denatured proteins, in association with DnaK and GrpE. It is the nucleotide exchange factor for DnaK and may function as a thermosensor. Unfolded proteins bind initially to DnaJ; upon interaction with the DnaJ-bound protein, DnaK hydrolyzes its bound ATP, resulting in the formation of a stable complex. GrpE releases ADP from DnaK; ATP binding to DnaK triggers the release of the substrate protein, thus completing the reaction cycle. Several rounds of ATP-dependent interactions between DnaJ, DnaK and GrpE are required for fully efficient folding. This is Protein GrpE from Methylocella silvestris (strain DSM 15510 / CIP 108128 / LMG 27833 / NCIMB 13906 / BL2).